A 929-amino-acid chain; its full sequence is Probable LRR receptor-like serine/threonine-protein kinase At1g67720 (929 aa).

The N-terminal stretch at 1–21 (MGLCLAQLAVTCLFLVPFVLS) is a signal peptide. Topologically, residues 22-531 (QVTEFVSIDC…NEAQRKHFWQ (510 aa)) are extracellular. Asparagine 36, asparagine 173, asparagine 236, asparagine 293, asparagine 320, asparagine 332, and asparagine 407 each carry an N-linked (GlcNAc...) asparagine glycan. LRR repeat units follow at residues 413–437 (PPRVTKIALSRKNLRGEIPPGINYM), 438–460 (EALTELWLDDNELTGTLPDMSKL), 461–484 (VNLKIMHLENNQLSGSLPPYLAHL), and 485–508 (PNLQELSIENNSFKGKIPSALLKG). Asparagine 494 is a glycosylation site (N-linked (GlcNAc...) asparagine). The chain crosses the membrane as a helical span at residues 532–552 (ILGISIAAVAILLLLVGGSLV). The Cytoplasmic segment spans residues 553–929 (LLCALRKTKR…SRNSLAPAAR (377 aa)). Residues 606–880 (DNFSKKVGRG…EVIVAIQDAI (275 aa)) form the Protein kinase domain. ATP contacts are provided by residues 612–620 (VGRGSFGSV) and lysine 634. Phosphotyrosine is present on tyrosine 679. The active-site Proton acceptor is the aspartate 731. Phosphoserine occurs at positions 735 and 764. Position 770 is a phosphothreonine (threonine 770). At tyrosine 778 the chain carries Phosphotyrosine.

Belongs to the protein kinase superfamily. Ser/Thr protein kinase family.

It is found in the membrane. It catalyses the reaction L-seryl-[protein] + ATP = O-phospho-L-seryl-[protein] + ADP + H(+). The enzyme catalyses L-threonyl-[protein] + ATP = O-phospho-L-threonyl-[protein] + ADP + H(+). This Arabidopsis thaliana (Mouse-ear cress) protein is Probable LRR receptor-like serine/threonine-protein kinase At1g67720.